The following is a 591-amino-acid chain: Aspartate--tRNA ligase (591 aa).

E176 contacts L-aspartate. The interval 200–203 (QILK) is aspartate. R222 contributes to the L-aspartate binding site. ATP contacts are provided by residues 222-224 (RDE) and Q231. H450 serves as a coordination point for L-aspartate. E484 lines the ATP pocket. R491 lines the L-aspartate pocket. 536-539 (GLDR) is a binding site for ATP.

This sequence belongs to the class-II aminoacyl-tRNA synthetase family. Type 1 subfamily. As to quaternary structure, homodimer.

The protein resides in the cytoplasm. It catalyses the reaction tRNA(Asp) + L-aspartate + ATP = L-aspartyl-tRNA(Asp) + AMP + diphosphate. Its function is as follows. Catalyzes the attachment of L-aspartate to tRNA(Asp) in a two-step reaction: L-aspartate is first activated by ATP to form Asp-AMP and then transferred to the acceptor end of tRNA(Asp). The chain is Aspartate--tRNA ligase from Listeria welshimeri serovar 6b (strain ATCC 35897 / DSM 20650 / CCUG 15529 / CIP 8149 / NCTC 11857 / SLCC 5334 / V8).